The chain runs to 338 residues: Ketol-acid reductoisomerase (NADP(+)) (338 aa).

Residues 1–181 enclose the KARI N-terminal Rossmann domain; the sequence is MKVFYDKDCD…GGGKAGIIET (181 aa). NADP(+) is bound by residues 24–27, R47, and S52; that span reads YGSQ. Residue H107 is part of the active site. Residue G133 participates in NADP(+) binding. A KARI C-terminal knotted domain is found at 182–327; it reads NFKEETETDL…AQLRAMMPWI (146 aa). Residues D190, E194, E226, and E230 each coordinate Mg(2+). Substrate is bound at residue S251.

This sequence belongs to the ketol-acid reductoisomerase family. Mg(2+) is required as a cofactor.

It catalyses the reaction (2R)-2,3-dihydroxy-3-methylbutanoate + NADP(+) = (2S)-2-acetolactate + NADPH + H(+). The enzyme catalyses (2R,3R)-2,3-dihydroxy-3-methylpentanoate + NADP(+) = (S)-2-ethyl-2-hydroxy-3-oxobutanoate + NADPH + H(+). It functions in the pathway amino-acid biosynthesis; L-isoleucine biosynthesis; L-isoleucine from 2-oxobutanoate: step 2/4. Its pathway is amino-acid biosynthesis; L-valine biosynthesis; L-valine from pyruvate: step 2/4. Functionally, involved in the biosynthesis of branched-chain amino acids (BCAA). Catalyzes an alkyl-migration followed by a ketol-acid reduction of (S)-2-acetolactate (S2AL) to yield (R)-2,3-dihydroxy-isovalerate. In the isomerase reaction, S2AL is rearranged via a Mg-dependent methyl migration to produce 3-hydroxy-3-methyl-2-ketobutyrate (HMKB). In the reductase reaction, this 2-ketoacid undergoes a metal-dependent reduction by NADPH to yield (R)-2,3-dihydroxy-isovalerate. This chain is Ketol-acid reductoisomerase (NADP(+)), found in Paracidovorax citrulli (strain AAC00-1) (Acidovorax citrulli).